The following is a 211-amino-acid chain: ATP-dependent Clp protease proteolytic subunit (211 aa).

The active-site Nucleophile is the Ser114. His139 is a catalytic residue.

Belongs to the peptidase S14 family. As to quaternary structure, fourteen ClpP subunits assemble into 2 heptameric rings which stack back to back to give a disk-like structure with a central cavity, resembling the structure of eukaryotic proteasomes.

The protein resides in the cytoplasm. The enzyme catalyses Hydrolysis of proteins to small peptides in the presence of ATP and magnesium. alpha-casein is the usual test substrate. In the absence of ATP, only oligopeptides shorter than five residues are hydrolyzed (such as succinyl-Leu-Tyr-|-NHMec, and Leu-Tyr-Leu-|-Tyr-Trp, in which cleavage of the -Tyr-|-Leu- and -Tyr-|-Trp bonds also occurs).. Cleaves peptides in various proteins in a process that requires ATP hydrolysis. Has a chymotrypsin-like activity. Plays a major role in the degradation of misfolded proteins. The protein is ATP-dependent Clp protease proteolytic subunit of Pseudomonas fluorescens (strain Pf0-1).